Consider the following 100-residue polypeptide: Sodium-influx-stimulating peptide (100 aa).

Residues M1–S23 form the signal peptide.

In terms of processing, three disulfide bonds are present. In terms of tissue distribution, expressed by the yellow cells, peptidergic (neuroendocrine) neurons of the central nervous system.

Its function is as follows. Stimulates integumental Na(+) uptake. Controls the activity of sodium pumps in the integument, pericardium, ureter and nephridial gland. This is Sodium-influx-stimulating peptide (SIS) from Lymnaea stagnalis (Great pond snail).